Consider the following 143-residue polypeptide: Protein SLC31A2 (143 aa).

Topologically, residues 1 to 22 are extracellular; it reads MAMHFIFSDTAVLLFDFWSVHS. Residues 23–43 form a helical membrane-spanning segment; it reads PAGMALSVLVLLLLAVLYEGI. Residues 44–93 are Cytoplasmic-facing; that stretch reads KVGKAKLLNQVLVNLPTSISQQTIAETDGDSAGSDSFPVGRTHHRWYLCH. Position 77 is a phosphoserine (S77). Residues 94 to 114 traverse the membrane as a helical segment; the sequence is FGQSLIHVIQVVIGYFIMLAV. Over 115–119 the chain is Extracellular; the sequence is MSYNT. Residues 120-140 traverse the membrane as a helical segment; sequence WIFLGVVLGSAVGYYLAYPLL. The Cytoplasmic segment spans residues 141–143; that stretch reads STA.

Belongs to the copper transporter (Ctr) (TC 1.A.56) family. SLC31A subfamily. In terms of assembly, oligomer. Interacts with SLC31A1; this interaction stabilizes SLC31A2 and protects it from ubiquitination and the subsequent degradation. Ubiquitinated; ubiquitination and the subsequent proteasomal degradation are prevent by SLC31A1 that stabilizes it. In terms of tissue distribution, ubiquitous with high expression in placenta and heart.

The protein resides in the membrane. It is found in the cytoplasmic vesicle membrane. It localises to the late endosome membrane. Its subcellular location is the lysosome membrane. Functionally, does not function as a copper(1+) importer in vivo. However, in vitro functions as a low-affinity copper(1+) importer. Regulator of SLC31A1 which facilitates the cleavage of the SLC31A1 ecto-domain or which stabilizes the truncated form of SLC31A1 (Truncated CTR1 form), thereby drives the SLC31A1 truncated form-dependent endosomal copper export and modulates the copper and cisplatin accumulation via SLC31A1. This is Protein SLC31A2 from Homo sapiens (Human).